The chain runs to 79 residues: uncharacterized protein (79 aa).

A disordered region spans residues 51-79 (PAQFPKVQRPPTLLGGKNTSTQTTLHPVI). Over residues 67-79 (KNTSTQTTLHPVI) the composition is skewed to polar residues.

This is an uncharacterized protein from Homo sapiens (Human).